A 130-amino-acid chain; its full sequence is uncharacterized protein (130 aa).

This sequence belongs to the HesB/IscA family.

This is an uncharacterized protein from Buchnera aphidicola subsp. Acyrthosiphon pisum (strain APS) (Acyrthosiphon pisum symbiotic bacterium).